Here is an 887-residue protein sequence, read N- to C-terminus: Cytoplasmic aconitate hydratase (887 aa).

Residues glutamine 84 and 204–206 (DSH) contribute to the substrate site. Residues cysteine 436, cysteine 502, and cysteine 505 each coordinate [4Fe-4S] cluster. Substrate-binding positions include arginine 535, arginine 540, arginine 697, and 777–778 (SR).

Belongs to the aconitase/IPM isomerase family. As to quaternary structure, interacts with gex-3. [4Fe-4S] cluster is required as a cofactor.

The protein resides in the cytoplasm. It localises to the cytosol. It carries out the reaction citrate = D-threo-isocitrate. Functionally, catalyzes the isomerization of citrate to isocitrate via cis-aconitate. Has probably no RNA-binding activity. The chain is Cytoplasmic aconitate hydratase (aco-1) from Caenorhabditis elegans.